We begin with the raw amino-acid sequence, 177 residues long: ATP-dependent protease subunit HslV (177 aa).

The active site involves threonine 6. Na(+) contacts are provided by alanine 162, cysteine 165, and threonine 168.

Belongs to the peptidase T1B family. HslV subfamily. A double ring-shaped homohexamer of HslV is capped on each side by a ring-shaped HslU homohexamer. The assembly of the HslU/HslV complex is dependent on binding of ATP.

Its subcellular location is the cytoplasm. The catalysed reaction is ATP-dependent cleavage of peptide bonds with broad specificity.. Its activity is regulated as follows. Allosterically activated by HslU binding. Protease subunit of a proteasome-like degradation complex believed to be a general protein degrading machinery. The polypeptide is ATP-dependent protease subunit HslV (Lawsonia intracellularis (strain PHE/MN1-00)).